We begin with the raw amino-acid sequence, 200 residues long: Protein GrpE (200 aa).

A compositionally biased stretch (basic and acidic residues) spans 1-25 (MMSKQNKKDWKKFKDEHKEEHKVEN). The tract at residues 1–52 (MMSKQNKKDWKKFKDEHKEEHKVENEILEEETDEESQHQEPALGHPSYTALE) is disordered.

The protein belongs to the GrpE family. In terms of assembly, homodimer.

Its subcellular location is the cytoplasm. Functionally, participates actively in the response to hyperosmotic and heat shock by preventing the aggregation of stress-denatured proteins, in association with DnaK and GrpE. It is the nucleotide exchange factor for DnaK and may function as a thermosensor. Unfolded proteins bind initially to DnaJ; upon interaction with the DnaJ-bound protein, DnaK hydrolyzes its bound ATP, resulting in the formation of a stable complex. GrpE releases ADP from DnaK; ATP binding to DnaK triggers the release of the substrate protein, thus completing the reaction cycle. Several rounds of ATP-dependent interactions between DnaJ, DnaK and GrpE are required for fully efficient folding. The protein is Protein GrpE of Legionella pneumophila subsp. pneumophila (strain Philadelphia 1 / ATCC 33152 / DSM 7513).